The chain runs to 164 residues: uncharacterized protein (164 aa).

The next 4 membrane-spanning stretches (helical) occupy residues 25-45 (QFGFSYGLFGLSGALIYPLLG), 63-83 (GMAVLLLYVPHIGSVVQVYIV), 120-140 (FWTAVFSAAAIMLGGFLADFF), and 141-161 (TVQMIFYASSILYFLSGLMMM).

The protein belongs to the major facilitator superfamily.

The protein resides in the cell membrane. This is an uncharacterized protein from Bacillus subtilis (strain 168).